Reading from the N-terminus, the 404-residue chain is Metacaspase-1 (404 aa).

Residues 1–97 (MHHHHQQPSY…NPQAFGHGAP (97 aa)) are disordered. Active-site residues include His-195 and Cys-251.

Belongs to the peptidase C14B family.

Functionally, involved in cell death (apoptosis). The polypeptide is Metacaspase-1 (casA) (Emericella nidulans (strain FGSC A4 / ATCC 38163 / CBS 112.46 / NRRL 194 / M139) (Aspergillus nidulans)).